A 675-amino-acid polypeptide reads, in one-letter code: DNA ligase (675 aa).

NAD(+) contacts are provided by residues 35 to 39 (DSEYD), 84 to 85 (SL), and Glu-115. Lys-117 (N6-AMP-lysine intermediate) is an active-site residue. NAD(+) is bound by residues Arg-138, Glu-175, Lys-292, and Lys-316. Cys-410, Cys-413, Cys-428, and Cys-434 together coordinate Zn(2+). Residues 593 to 675 (QIVQPLLGRT…RNFLDDTSFP (83 aa)) enclose the BRCT domain.

It belongs to the NAD-dependent DNA ligase family. LigA subfamily. Mg(2+) is required as a cofactor. It depends on Mn(2+) as a cofactor.

It carries out the reaction NAD(+) + (deoxyribonucleotide)n-3'-hydroxyl + 5'-phospho-(deoxyribonucleotide)m = (deoxyribonucleotide)n+m + AMP + beta-nicotinamide D-nucleotide.. DNA ligase that catalyzes the formation of phosphodiester linkages between 5'-phosphoryl and 3'-hydroxyl groups in double-stranded DNA using NAD as a coenzyme and as the energy source for the reaction. It is essential for DNA replication and repair of damaged DNA. The chain is DNA ligase from Nitrosococcus oceani (strain ATCC 19707 / BCRC 17464 / JCM 30415 / NCIMB 11848 / C-107).